Consider the following 234-residue polypeptide: Orotidine 5'-phosphate decarboxylase (234 aa).

Substrate contacts are provided by residues aspartate 10, lysine 31, 58-67 (DLKLHDIPNT), threonine 121, arginine 183, glutamine 192, glycine 212, and arginine 213. Residue lysine 60 is the Proton donor of the active site.

This sequence belongs to the OMP decarboxylase family. Type 1 subfamily. As to quaternary structure, homodimer.

It carries out the reaction orotidine 5'-phosphate + H(+) = UMP + CO2. It functions in the pathway pyrimidine metabolism; UMP biosynthesis via de novo pathway; UMP from orotate: step 2/2. In terms of biological role, catalyzes the decarboxylation of orotidine 5'-monophosphate (OMP) to uridine 5'-monophosphate (UMP). This is Orotidine 5'-phosphate decarboxylase from Lysinibacillus sphaericus (strain C3-41).